The chain runs to 216 residues: Ras-related protein RABE1a (216 aa).

Position 22–29 (22–29 (GDSGVGKS)) interacts with GTP. The short motif at 44–52 (FITTIGIDF) is the Effector region element. Residues 70–74 (DTAGQ), 128–131 (NKAD), and 159–160 (SA) each bind GTP. The disordered stretch occupies residues 185 to 216 (DARAEPQTIKINQSDQGAGTSQATQKSACCGT). Residues 193–216 (IKINQSDQGAGTSQATQKSACCGT) show a composition bias toward polar residues. Residues C213 and C214 are each lipidated (S-geranylgeranyl cysteine).

Belongs to the small GTPase superfamily. Rab family. As to quaternary structure, interacts with PI5K2.

The protein localises to the golgi apparatus membrane. Its subcellular location is the cell membrane. In terms of biological role, involved in membrane trafficking from the Golgi to the plasma membrane. The polypeptide is Ras-related protein RABE1a (RABE1A) (Arabidopsis thaliana (Mouse-ear cress)).